Consider the following 215-residue polypeptide: Pyrrolidone-carboxylate peptidase (215 aa).

Active-site residues include Glu80, Cys143, and His167.

Belongs to the peptidase C15 family. As to quaternary structure, homotetramer.

The protein resides in the cytoplasm. It carries out the reaction Release of an N-terminal pyroglutamyl group from a polypeptide, the second amino acid generally not being Pro.. Its function is as follows. Removes 5-oxoproline from various penultimate amino acid residues except L-proline. In Bacillus cereus (strain Q1), this protein is Pyrrolidone-carboxylate peptidase.